Here is a 161-residue protein sequence, read N- to C-terminus: Arginine repressor (161 aa).

Belongs to the ArgR family.

The protein resides in the cytoplasm. It functions in the pathway amino-acid biosynthesis; L-arginine biosynthesis [regulation]. In terms of biological role, regulates arginine biosynthesis genes. The chain is Arginine repressor from Corynebacterium aurimucosum (strain ATCC 700975 / DSM 44827 / CIP 107346 / CN-1) (Corynebacterium nigricans).